An 801-amino-acid chain; its full sequence is Phenylalanine--tRNA ligase beta subunit (801 aa).

One can recognise a tRNA-binding domain in the interval 39–153 (AEGLSKLVVG…EDAVPGESIF (115 aa)). A B5 domain is found at 406–481 (TDDIQVSTSL…RIYGYDKLPT (76 aa)). Positions 459, 465, 468, and 469 each coordinate Mg(2+). The region spanning 708-801 (TKFPAVSRDI…LTEKVGAEVR (94 aa)) is the FDX-ACB domain.

Belongs to the phenylalanyl-tRNA synthetase beta subunit family. Type 1 subfamily. As to quaternary structure, tetramer of two alpha and two beta subunits. Requires Mg(2+) as cofactor.

It is found in the cytoplasm. It carries out the reaction tRNA(Phe) + L-phenylalanine + ATP = L-phenylalanyl-tRNA(Phe) + AMP + diphosphate + H(+). This Streptococcus mutans serotype c (strain ATCC 700610 / UA159) protein is Phenylalanine--tRNA ligase beta subunit.